A 740-amino-acid chain; its full sequence is Zn(2)-C6 fungal-type transcription factor mpsB (740 aa).

Residues 25–46 (RLKCDRNQPCSTCSHRGLSFSC) constitute a DNA-binding region (zn(2)-C6 fungal-type). The segment at 625–645 (SISTPSHDQDDLDGEAATEAT) is disordered.

It localises to the nucleus. In terms of biological role, transcription factor; part of the gene cluster that mediates the biosynthesis of macrophasetins, 3-decalinoyltetramic acids (DTAs) which feature a tetramate (pyrrolidine-2,4-dione) unit connected to a decalin fragment and that have potent bioactivities. The polypeptide is Zn(2)-C6 fungal-type transcription factor mpsB (Macrophomina phaseolina (strain MS6) (Charcoal rot fungus)).